We begin with the raw amino-acid sequence, 78 residues long: Large ribosomal subunit protein bL28 (78 aa).

The protein belongs to the bacterial ribosomal protein bL28 family.

The sequence is that of Large ribosomal subunit protein bL28 from Methylococcus capsulatus (strain ATCC 33009 / NCIMB 11132 / Bath).